A 376-amino-acid chain; its full sequence is Erythronate-4-phosphate dehydrogenase (376 aa).

Substrate contacts are provided by serine 45 and threonine 67. Aspartate 147 is an NAD(+) binding site. The active site involves arginine 209. Aspartate 233 contributes to the NAD(+) binding site. Glutamate 238 is a catalytic residue. Histidine 255 functions as the Proton donor in the catalytic mechanism. Glycine 258 contacts NAD(+). Residue tyrosine 259 participates in substrate binding.

The protein belongs to the D-isomer specific 2-hydroxyacid dehydrogenase family. PdxB subfamily. As to quaternary structure, homodimer.

The protein localises to the cytoplasm. The catalysed reaction is 4-phospho-D-erythronate + NAD(+) = (R)-3-hydroxy-2-oxo-4-phosphooxybutanoate + NADH + H(+). It participates in cofactor biosynthesis; pyridoxine 5'-phosphate biosynthesis; pyridoxine 5'-phosphate from D-erythrose 4-phosphate: step 2/5. Its function is as follows. Catalyzes the oxidation of erythronate-4-phosphate to 3-hydroxy-2-oxo-4-phosphonooxybutanoate. This chain is Erythronate-4-phosphate dehydrogenase, found in Shewanella baltica (strain OS155 / ATCC BAA-1091).